The sequence spans 194 residues: Inosine triphosphate pyrophosphatase (194 aa).

11-16 (TGNAKK) contacts ITP. Residue E39 coordinates Mg(2+). ITP-binding positions include K51, 67-68 (DT), K84, 143-146 (FGWD), K166, and 171-172 (HR).

The protein belongs to the HAM1 NTPase family. In terms of assembly, homodimer. Mg(2+) serves as cofactor. Requires Mn(2+) as cofactor.

It is found in the cytoplasm. The catalysed reaction is ITP + H2O = IMP + diphosphate + H(+). It catalyses the reaction dITP + H2O = dIMP + diphosphate + H(+). It carries out the reaction XTP + H2O = XMP + diphosphate + H(+). In terms of biological role, pyrophosphatase that hydrolyzes non-canonical purine nucleotides such as inosine triphosphate (ITP), deoxyinosine triphosphate (dITP) or xanthosine 5'-triphosphate (XTP) to their respective monophosphate derivatives. The enzyme does not distinguish between the deoxy- and ribose forms. Probably excludes non-canonical purines from RNA and DNA precursor pools, thus preventing their incorporation into RNA and DNA and avoiding chromosomal lesions. In Dictyostelium discoideum (Social amoeba), this protein is Inosine triphosphate pyrophosphatase (itpa).